A 392-amino-acid chain; its full sequence is Phosphoglycerate kinase (392 aa).

Residues 21-23, R36, 59-62, R114, and R147 each bind substrate; these read DMN and HLGR. ATP-binding positions include K198, E320, and 346–349; that span reads GGDT.

Belongs to the phosphoglycerate kinase family. Monomer.

It is found in the cytoplasm. The enzyme catalyses (2R)-3-phosphoglycerate + ATP = (2R)-3-phospho-glyceroyl phosphate + ADP. Its pathway is carbohydrate degradation; glycolysis; pyruvate from D-glyceraldehyde 3-phosphate: step 2/5. This Neisseria meningitidis serogroup B (strain ATCC BAA-335 / MC58) protein is Phosphoglycerate kinase (pgk).